The sequence spans 632 residues: Galactan 5-O-arabinofuranosyltransferase (632 aa).

The next 13 helical transmembrane spans lie at 10 to 30 (QIVL…IAIA), 45 to 65 (ALTT…GGVW), 76 to 96 (LGGL…PLGA), 162 to 182 (WAIT…WQMI), 184 to 204 (FEYA…YSSP), 206 to 226 (PYAA…WSGL), 242 to 259 (GWAT…AATW), 263 to 282 (LLAY…ATAL), 298 to 318 (LAGI…PFLA), 344 to 364 (FPML…LWLI), 375 to 395 (ALMI…LTTL), 409 to 429 (LTVL…QSLA), and 434 to 454 (AVLS…SQDI). The Extracellular segment spans residues 455–632 (PNVLRPDLTI…LAIRKPMGNA (178 aa)).

It belongs to the glycosyltransferase 85 family.

The protein resides in the cell membrane. The enzyme catalyses Adds an alpha-D-arabinofuranosyl group from trans,octacis-decaprenylphospho-beta-D-arabinofuranose at the 5-O-position of the eighth, tenth and twelfth galactofuranose unit of the galactofuranan chain of [beta-D-galactofuranosyl-(1-&gt;5)-beta-D-galactofuranosyl-(1-&gt;6)]14-beta-D-galactofuranosyl-(1-&gt;5)-beta-D-galactofuranosyl-(1-&gt;4)-alpha-L-rhamnopyranosyl-(1-&gt;3)-N-acetyl-alpha-D-glucosaminyl-diphospho-trans,octacis-decaprenol.. Its pathway is cell wall biogenesis; cell wall polysaccharide biosynthesis. Involved in the biosynthesis of the arabinogalactan (AG) region of the mycolylarabinogalactan-peptidoglycan (mAGP) complex, an essential component of the mycobacterial cell wall. Catalyzes the addition of the first key arabinofuranosyl (Araf) residue from the sugar donor decaprenyl-phospho-arabinose (DPA) on the C-5 of a 6-linked galactofuranosyl (Galf) of the galactan domain, thus 'priming' the galactan for further elaboration by other arabinofuranosyltransferases. This Mycobacterium leprae (strain TN) protein is Galactan 5-O-arabinofuranosyltransferase.